The primary structure comprises 307 residues: 2-haloacid dehalogenase, configuration-inverting (307 aa).

It belongs to the HAD-like hydrolase superfamily. S-2-haloalkanoic acid dehalogenase family. As to quaternary structure, homodimer.

The catalysed reaction is an (S)-2-haloacid + H2O = a (2R)-2-hydroxycarboxylate + a halide anion + H(+). The enzyme catalyses an (R)-2-haloacid + H2O = a (2S)-2-hydroxycarboxylate + a halide anion + H(+). Functionally, dehalogenates both (S)- and (R)-2-haloalkanoic acids to the corresponding (R)- and (S)-hydroxyalkanoic acids, respectively, with inversion of configuration at C-2. Acts on 2-haloalkanoic acids whose carbon chain lengths are five or less. The protein is 2-haloacid dehalogenase, configuration-inverting of Pseudomonas sp. (strain 113).